Consider the following 227-residue polypeptide: TMF-regulated nuclear protein 1 (227 aa).

Disordered stretches follow at residues 1–72 and 200–227; these read MPGC…ELQR and GRLR…SPQR. A compositionally biased stretch (pro residues) spans 22 to 55; the sequence is SPPPPWDPMPSSQPPPPTPTLTPTPTPGQSPPLP.

Interacts with TMF1; may regulate TRNP1 proteasomal degradation. Ubiquitinated, leading to its degradation by the proteasome.

Its subcellular location is the nucleus. DNA-binding factor that regulates the expression of a subset of genes and plays a key role in tangential, radial, and lateral expansion of the brain neocortex. Regulates neural stem cells proliferation and the production of intermediate neural progenitors and basal radial glial cells affecting the process of cerebral cortex gyrification. May control the proliferation rate of cells by regulating their progression through key cell-cycle transition points. In Homo sapiens (Human), this protein is TMF-regulated nuclear protein 1 (TRNP1).